The following is a 302-amino-acid chain: Bifunctional protein FolD (302 aa).

Residues 165-167 (GRS), Ser190, and Ile231 contribute to the NADP(+) site.

The protein belongs to the tetrahydrofolate dehydrogenase/cyclohydrolase family. In terms of assembly, homodimer.

The catalysed reaction is (6R)-5,10-methylene-5,6,7,8-tetrahydrofolate + NADP(+) = (6R)-5,10-methenyltetrahydrofolate + NADPH. The enzyme catalyses (6R)-5,10-methenyltetrahydrofolate + H2O = (6R)-10-formyltetrahydrofolate + H(+). Its pathway is one-carbon metabolism; tetrahydrofolate interconversion. Its function is as follows. Catalyzes the oxidation of 5,10-methylenetetrahydrofolate to 5,10-methenyltetrahydrofolate and then the hydrolysis of 5,10-methenyltetrahydrofolate to 10-formyltetrahydrofolate. In Prochlorococcus marinus (strain MIT 9313), this protein is Bifunctional protein FolD.